The chain runs to 79 residues: RNA-binding protein Hfq (79 aa).

The 60-residue stretch at 10–69 folds into the Sm domain; it reads DPFLNALRKEHVPVSIYLVNGIKLQGNIESFDQYVVLLRNTVTQMVYKHAISTVVPARAV.

Belongs to the Hfq family. As to quaternary structure, homohexamer.

Functionally, RNA chaperone that binds small regulatory RNA (sRNAs) and mRNAs to facilitate mRNA translational regulation in response to envelope stress, environmental stress and changes in metabolite concentrations. Also binds with high specificity to tRNAs. The protein is RNA-binding protein Hfq of Cupriavidus metallidurans (strain ATCC 43123 / DSM 2839 / NBRC 102507 / CH34) (Ralstonia metallidurans).